The sequence spans 341 residues: tRNA (guanine-N(7)-)-methyltransferase (341 aa).

Positions 75, 100, 127, and 150 each coordinate S-adenosyl-L-methionine. Asp-150 is an active-site residue. Residue Lys-154 participates in substrate binding. Residues Arg-156–Arg-161 form an interaction with RNA region. Asp-186 contributes to the substrate binding site.

Belongs to the class I-like SAM-binding methyltransferase superfamily. TrmB family.

The enzyme catalyses guanosine(46) in tRNA + S-adenosyl-L-methionine = N(7)-methylguanosine(46) in tRNA + S-adenosyl-L-homocysteine. Its pathway is tRNA modification; N(7)-methylguanine-tRNA biosynthesis. Its function is as follows. Catalyzes the formation of N(7)-methylguanine at position 46 (m7G46) in tRNA. The chain is tRNA (guanine-N(7)-)-methyltransferase from Xanthomonas euvesicatoria pv. vesicatoria (strain 85-10) (Xanthomonas campestris pv. vesicatoria).